The primary structure comprises 222 residues: 2-amino-5-formylamino-6-ribosylaminopyrimidin-4(3H)-one 5'-monophosphate deformylase (222 aa).

Glu29, His31, Asp40, and His108 together coordinate Fe cation.

Belongs to the creatininase superfamily. FAPy deformylase family. Homodimer. The cofactor is Fe(2+). Zn(2+) serves as cofactor.

It carries out the reaction 2-amino-5-formylamino-6-(5-phospho-D-ribosylamino)pyrimidin-4(3H)-one + H2O = 2,5-diamino-6-(1-D-ribosylamino)pyrimidin-4(3H)-one 5'-phosphate + formate + H(+). Its pathway is cofactor biosynthesis; coenzyme F420 biosynthesis. It participates in cofactor biosynthesis; riboflavin biosynthesis. Its function is as follows. Catalyzes the hydrolysis of the formamide of 2-amino-5-formylamino-6-ribosylamino-4(3H)-pyrimidinone 5'-monophosphate (FAPy) to form 2,5-diamino-6-ribosylamino-4(3H)-pyrimidinone 5'-phosphate (APy). The polypeptide is 2-amino-5-formylamino-6-ribosylaminopyrimidin-4(3H)-one 5'-monophosphate deformylase (Methanocaldococcus infernus (strain DSM 11812 / JCM 15783 / ME)).